The primary structure comprises 143 residues: Large ribosomal subunit protein eL28y (143 aa).

It belongs to the eukaryotic ribosomal protein eL28 family.

In Arabidopsis thaliana (Mouse-ear cress), this protein is Large ribosomal subunit protein eL28y (RPL28C).